The following is a 259-amino-acid chain: Global transcriptional regulator CodY (259 aa).

A GAF domain region spans residues 1–155 (MDLLSKTRRI…GATVVGMEIL (155 aa)). The segment at residues 203-222 (ASKIADRVGITRSVIVNALR) is a DNA-binding region (H-T-H motif).

The protein belongs to the CodY family.

It localises to the cytoplasm. Functionally, DNA-binding global transcriptional regulator which is involved in the adaptive response to starvation and acts by directly or indirectly controlling the expression of numerous genes in response to nutrient availability. During rapid exponential growth, CodY is highly active and represses genes whose products allow adaptation to nutrient depletion. This is Global transcriptional regulator CodY from Brevibacillus brevis (strain 47 / JCM 6285 / NBRC 100599).